The following is a 1069-amino-acid chain: Regulator of nonsense transcripts 1 (1069 aa).

The interval 1-86 (MDDSDDEYSR…SEKSLTEEQH (86 aa)) is disordered. The span at 28–50 (IGNTQDSQFAYEQFSVPTQSSQA) shows a compositional bias: polar residues. Residues 51-65 (TDLLPGGTDGTTNDL) show a composition bias toward low complexity. Positions 77–86 (SEKSLTEEQH) are enriched in basic and acidic residues. Residues 87–244 (EQKLPEHACR…VRMEELWRDH (158 aa)) form the Upf1 CH-rich domain. 12 residues coordinate Zn(2+): Cys-95, Cys-98, Cys-109, Cys-112, Cys-117, His-127, His-131, His-137, Cys-155, Cys-158, Cys-181, and Cys-185. Positions 95–127 (CRYCGISDPLCVAKCTVCRKWFCNSNDGTSGGH) are C3H. A CC/SHH/C region spans residues 109-137 (CTVCRKWFCNSNDGTSGGHIVHHMVRSQH). The tract at residues 155–185 (CYRCGSKNVFNLGFIPGKKDQVVVIICRTPC) is C4. Residues Gln-450, 467 to 474 (GPPGTGKT), Gln-639, Tyr-676, and Glu-807 each bind ATP. Residues 966 to 1069 (ARNQKDRRRG…MDDLLFSQDC (104 aa)) form a disordered region. Over residues 991 to 1013 (SQGMMSQQSQQYPPQGASSQSQY) the composition is skewed to low complexity.

Belongs to the DNA2/NAM7 helicase family. Phosphorylated probably by smg-1. Smg-3 and smg-4 are required for phosphorylation.

The protein resides in the cytoplasm. The enzyme catalyses ATP + H2O = ADP + phosphate + H(+). Its function is as follows. RNA-dependent helicase required for nonsense-mediated decay (NMD) of aberrant mRNAs containing premature stop codons and modulates the expression level of normal mRNAs. Is recruited to mRNAs upon translation termination and undergoes a cycle of phosphorylation and dephosphorylation; its phosphorylation appears to be a key step in NMD. The formation of an smg-2-3-4 surveillance complex is believed to activate NMD. The chain is Regulator of nonsense transcripts 1 (smg-2) from Caenorhabditis elegans.